The primary structure comprises 148 residues: Large ribosomal subunit protein bL9 (148 aa).

The protein belongs to the bacterial ribosomal protein bL9 family.

Its function is as follows. Binds to the 23S rRNA. The protein is Large ribosomal subunit protein bL9 of Solibacter usitatus (strain Ellin6076).